We begin with the raw amino-acid sequence, 296 residues long: Probable endonuclease 4 (296 aa).

Zn(2+) is bound by residues histidine 68, histidine 109, glutamate 144, aspartate 178, histidine 181, histidine 213, aspartate 226, histidine 228, and glutamate 258.

Belongs to the AP endonuclease 2 family. Zn(2+) serves as cofactor.

The enzyme catalyses Endonucleolytic cleavage to 5'-phosphooligonucleotide end-products.. Endonuclease IV plays a role in DNA repair. It cleaves phosphodiester bonds at apurinic or apyrimidinic (AP) sites, generating a 3'-hydroxyl group and a 5'-terminal sugar phosphate. The chain is Probable endonuclease 4 from Staphylococcus aureus (strain Mu3 / ATCC 700698).